A 118-amino-acid chain; its full sequence is Non-specific lipid-transfer protein 2A (118 aa).

The N-terminal stretch at 1 to 26 (MARAQLVLVALVAAALLLAGPHTTMA) is a signal peptide. 4 disulfides stabilise this stretch: C30–C77, C40–C54, C55–C100, and C75–C114.

Belongs to the plant LTP family.

In terms of biological role, plant non-specific lipid-transfer proteins transfer phospholipids as well as galactolipids across membranes. May play a role in wax or cutin deposition in the cell walls of expanding epidermal cells and certain secretory tissues. The protein is Non-specific lipid-transfer protein 2A (LTP2-A) of Oryza sativa subsp. japonica (Rice).